Here is a 73-residue protein sequence, read N- to C-terminus: UPF0154 protein MG335.1 homolog (73 aa).

A helical membrane pass occupies residues 6–26 (LALGLGIPLSLLVGVIIGYFI).

It belongs to the UPF0154 family.

The protein resides in the membrane. In Mycoplasma pneumoniae (strain ATCC 29342 / M129 / Subtype 1) (Mycoplasmoides pneumoniae), this protein is UPF0154 protein MG335.1 homolog.